We begin with the raw amino-acid sequence, 508 residues long: Pyruvate kinase, cytosolic isozyme (508 aa).

Residue R48 coordinates substrate. Residues N50, S52, D82, and T83 each coordinate K(+). 50-53 (NFSH) provides a ligand contact to ATP. Residues R89 and K174 each coordinate ATP. E240 serves as a coordination point for Mg(2+). Residues G263, D264, and T296 each contribute to the substrate site. D264 is a Mg(2+) binding site.

The protein belongs to the pyruvate kinase family. As to quaternary structure, homotetramer. It depends on Mg(2+) as a cofactor. The cofactor is K(+).

The protein localises to the cytoplasm. The catalysed reaction is pyruvate + ATP = phosphoenolpyruvate + ADP + H(+). It participates in carbohydrate degradation; glycolysis; pyruvate from D-glyceraldehyde 3-phosphate: step 5/5. This Nicotiana tabacum (Common tobacco) protein is Pyruvate kinase, cytosolic isozyme.